The sequence spans 159 residues: Ribosomal RNA large subunit methyltransferase H (159 aa).

S-adenosyl-L-methionine is bound by residues L76 and G108.

This sequence belongs to the RNA methyltransferase RlmH family. Homodimer.

The protein resides in the cytoplasm. The enzyme catalyses pseudouridine(1915) in 23S rRNA + S-adenosyl-L-methionine = N(3)-methylpseudouridine(1915) in 23S rRNA + S-adenosyl-L-homocysteine + H(+). Its function is as follows. Specifically methylates the pseudouridine at position 1915 (m3Psi1915) in 23S rRNA. This is Ribosomal RNA large subunit methyltransferase H from Natranaerobius thermophilus (strain ATCC BAA-1301 / DSM 18059 / JW/NM-WN-LF).